A 298-amino-acid polypeptide reads, in one-letter code: GTPase Era (298 aa).

Positions 3-170 (KSGFVAILGR…VQLLKDNLEE (168 aa)) constitute an Era-type G domain. The interval 11 to 18 (GRPNVGKS) is G1. GTP is bound at residue 11–18 (GRPNVGKS). The tract at residues 37 to 41 (QTTRN) is G2. Positions 58-61 (DTPG) are G3. GTP contacts are provided by residues 58-62 (DTPGI) and 120-123 (NKID). A G4 region spans residues 120–123 (NKID). Positions 149 to 151 (ISA) are G5. In terms of domain architecture, KH type-2 spans 201-279 (TQQEVPHSVA…YLETWVKVKK (79 aa)).

Belongs to the TRAFAC class TrmE-Era-EngA-EngB-Septin-like GTPase superfamily. Era GTPase family. Monomer.

The protein resides in the cytoplasm. The protein localises to the cell membrane. In terms of biological role, an essential GTPase that binds both GDP and GTP, with rapid nucleotide exchange. Plays a role in 16S rRNA processing and 30S ribosomal subunit biogenesis and possibly also in cell cycle regulation and energy metabolism. This is GTPase Era from Streptococcus equi subsp. equi (strain 4047).